Reading from the N-terminus, the 163-residue chain is Nucleotide-binding protein CJJ81176_0398 (163 aa).

The protein belongs to the YajQ family.

In terms of biological role, nucleotide-binding protein. The protein is Nucleotide-binding protein CJJ81176_0398 of Campylobacter jejuni subsp. jejuni serotype O:23/36 (strain 81-176).